A 436-amino-acid polypeptide reads, in one-letter code: Bifunctional IPC transferase and DIPP synthase (436 aa).

Residues G11–A241 form a mobA-like NTP transferase region. CTP contacts are provided by residues L17–A19 and K32. Residues A242–R435 form a CDP-alcohol phosphatidyltransferases region. Helical transmembrane passes span V275–L295, A349–T371, and L397–G417.

The protein in the N-terminal section; belongs to the MobA family. It in the C-terminal section; belongs to the CDP-alcohol phosphatidyltransferase class-I family.

It localises to the membrane. It carries out the reaction 1D-myo-inositol 3-phosphate + CTP + H(+) = CDP-1L-myo-inositol + diphosphate. The catalysed reaction is CDP-1L-myo-inositol + 1D-myo-inositol 3-phosphate = bis(1L-myo-inositol) 3,1'-phosphate 1-phosphate + CMP + H(+). In terms of biological role, involved in biosynthesis of di-myo-inositol phosphate (DIP), a widespread organic solute in microorganisms adapted to hot environments. Catalyzes the condensation of CTP and L-myo-inositol-1-phosphate into CDP-L-myo-inositol, as well as the biosynthesis of di-myo-inositol-1,3'-phosphate-1'-phosphate (DIPP) from CDP-L-myo-inositol and L-myo-inositol-1-phosphate. This Rubrobacter xylanophilus (strain DSM 9941 / JCM 11954 / NBRC 16129 / PRD-1) protein is Bifunctional IPC transferase and DIPP synthase.